A 274-amino-acid chain; its full sequence is Octanoyltransferase LipM (274 aa).

Residues 32 to 244 (GEVPPTLRFY…GFARALGLTL (213 aa)) enclose the BPL/LPL catalytic domain. The Acyl-thioester intermediate role is filled by C146.

The protein belongs to the octanoyltransferase LipM family. In terms of assembly, monomer.

It carries out the reaction octanoyl-[ACP] + L-lysyl-[protein] = N(6)-octanoyl-L-lysyl-[protein] + holo-[ACP] + H(+). It functions in the pathway protein modification; protein lipoylation via endogenous pathway; protein N(6)-(lipoyl)lysine from octanoyl-[acyl-carrier-protein]. Functionally, catalyzes the transfer of endogenously produced octanoic acid from octanoyl-acyl-carrier-protein onto the lipoyl domain of GcvH, an intermediate carrier during protein lipoylation. In Symbiobacterium thermophilum (strain DSM 24528 / JCM 14929 / IAM 14863 / T), this protein is Octanoyltransferase LipM.